We begin with the raw amino-acid sequence, 131 residues long: MSAKTEEILESLKSLSLLEASELVKQIEEAFGVSAAASAGVVMAAPGATGGDGDGGAAEEKTEFDVVLESFDAAAKIKVLKVVRNATGLGLGDAKALVESAPKTVKEGIAKADAESLKKEIEEAGGKVTLK.

This sequence belongs to the bacterial ribosomal protein bL12 family. In terms of assembly, homodimer. Part of the ribosomal stalk of the 50S ribosomal subunit. Forms a multimeric L10(L12)X complex, where L10 forms an elongated spine to which 2 to 4 L12 dimers bind in a sequential fashion. Binds GTP-bound translation factors.

Its function is as follows. Forms part of the ribosomal stalk which helps the ribosome interact with GTP-bound translation factors. Is thus essential for accurate translation. This chain is Large ribosomal subunit protein bL12, found in Prochlorococcus marinus (strain MIT 9312).